The chain runs to 489 residues: Virion host shutoff protein (489 aa).

4 disordered regions span residues 110–135 (EEASDVDASPPPSPITDSRPSSAFSN), 142–161 (SLASGTRGTAGSGAALPSAA), 285–316 (RSQTRRAIRREHTSSRSTETRPPLPPAAGGTE), and 333–363 (YEDDEDLPLDPRDVTGGHPGPRSSSSEILTP). The segment covering 124–134 (ITDSRPSSAFS) has biased composition (polar residues).

It belongs to the herpesviridae VHS protein family. In terms of assembly, interacts with human EIF4H, EIF4A1 and EIF4A2; interaction with eIF4AI and EIF4A2 presumably allows Vhs protein to associate with the eIF4F cap-binding complex.

The protein localises to the virion. Functionally, minor structural protein that acts as an endoribonuclease during lytic infection. Degrades host mRNAs in the cytoplasm by cutting them at preferred sites, including some in regions of translation initiation. Together with inhibition of host splicing by ICP27, contributes to an overall decrease in host protein synthesis. Also, after the onset of viral transcription, accelerates the turnover of viral mRNA, thereby facilitating the sequential expression of different classes of viral genes. Binds translation initiation factors eIF4H, eIF4AI, and eIF4AII, thereby may interact directly with the translation initiation complex and thus digest specifically mRNAs. Also impedes antigen presentation by major histocompatibility complex class I and class II molecules, inhibits secretion of cytokines that would otherwise recruit lymphocytes and neutrophils cells to the site of infection and blocks the activation of dendritic cells. Impedes the alpha/beta interferon-mediated response to infection by evading the cGAS/ STING-mediated DNA-sensing pathway and degrading CGAS via its RNase activity. This chain is Virion host shutoff protein (UL41), found in Human herpesvirus 1 (strain KOS) (HHV-1).